Here is a 313-residue protein sequence, read N- to C-terminus: Methionyl-tRNA formyltransferase (313 aa).

Position 112–115 (112–115) interacts with (6S)-5,6,7,8-tetrahydrofolate; it reads SLLP.

This sequence belongs to the Fmt family.

The catalysed reaction is L-methionyl-tRNA(fMet) + (6R)-10-formyltetrahydrofolate = N-formyl-L-methionyl-tRNA(fMet) + (6S)-5,6,7,8-tetrahydrofolate + H(+). In terms of biological role, attaches a formyl group to the free amino group of methionyl-tRNA(fMet). The formyl group appears to play a dual role in the initiator identity of N-formylmethionyl-tRNA by promoting its recognition by IF2 and preventing the misappropriation of this tRNA by the elongation apparatus. In Geotalea uraniireducens (strain Rf4) (Geobacter uraniireducens), this protein is Methionyl-tRNA formyltransferase.